We begin with the raw amino-acid sequence, 145 residues long: Lysozyme C (145 aa).

Positions 1–19 (MLFFGFLLAFLSAVPGTEG) are cleaved as a signal peptide. A C-type lysozyme domain is found at 20–145 (EIIPRCELVK…RDLSSYVKGC (126 aa)). Intrachain disulfides connect cysteine 25–cysteine 145, cysteine 49–cysteine 133, cysteine 82–cysteine 98, and cysteine 94–cysteine 112. Active-site residues include glutamate 54 and aspartate 70.

The protein belongs to the glycosyl hydrolase 22 family. As to quaternary structure, monomer.

Its subcellular location is the secreted. It carries out the reaction Hydrolysis of (1-&gt;4)-beta-linkages between N-acetylmuramic acid and N-acetyl-D-glucosamine residues in a peptidoglycan and between N-acetyl-D-glucosamine residues in chitodextrins.. Functionally, lysozymes have primarily a bacteriolytic function; those in tissues and body fluids are associated with the monocyte-macrophage system and enhance the activity of immunoagents. The chain is Lysozyme C (LYZ) from Opisthocomus hoazin (Hoatzin).